The following is a 362-amino-acid chain: MQTLHVELGDRRYPIFIGSQLNPQNLLAPYIKGRQVMIVTNTTLEQLYLQHYQDALHALDKQVAVCVLPDGEKYKNIEHLNLIFDALLKAGFNRDCTVLALGGGVIGDMAGFAAASFQRGVYFVQIPTTLLSQVDSSVGGKTGINHPLGKNMIGAFKQPEVVMADMSQLKTLPPRELSAGLAEVIKYALLGDIEFLGWLETHMDGLIAGDETLLAEAVYRSCAHKARIVANDEKEQGERALLNLGHTFGHAIESYLGYGEWLHGEAVATGMVMAADLSHRLGWISSGDLERTKKIIQRANLPISCPPIPLDEFLSYMSHDKKVLNGQLRLVLLQQLGQAIITKTFDVEMMKAAILANQASHT.

NAD(+) is bound by residues Asp70–Lys75, Gly104–Asp108, Thr128–Thr129, Lys141, and Lys150. The Zn(2+) site is built by Glu183, His246, and His263.

Belongs to the sugar phosphate cyclases superfamily. Dehydroquinate synthase family. The cofactor is Co(2+). Requires Zn(2+) as cofactor. It depends on NAD(+) as a cofactor.

The protein localises to the cytoplasm. It carries out the reaction 7-phospho-2-dehydro-3-deoxy-D-arabino-heptonate = 3-dehydroquinate + phosphate. Its pathway is metabolic intermediate biosynthesis; chorismate biosynthesis; chorismate from D-erythrose 4-phosphate and phosphoenolpyruvate: step 2/7. Its function is as follows. Catalyzes the conversion of 3-deoxy-D-arabino-heptulosonate 7-phosphate (DAHP) to dehydroquinate (DHQ). This chain is 3-dehydroquinate synthase, found in Acinetobacter baylyi (strain ATCC 33305 / BD413 / ADP1).